Reading from the N-terminus, the 59-residue chain is Large ribosomal subunit protein bL32 (59 aa).

The span at 1–19 (MAQPKKKTSKSRRNMRRSH) shows a compositional bias: basic residues. The tract at residues 1–20 (MAQPKKKTSKSRRNMRRSHD) is disordered.

It belongs to the bacterial ribosomal protein bL32 family.

The polypeptide is Large ribosomal subunit protein bL32 (Maridesulfovibrio salexigens (strain ATCC 14822 / DSM 2638 / NCIMB 8403 / VKM B-1763) (Desulfovibrio salexigens)).